The following is a 476-amino-acid chain: Proline dehydrogenase 2, mitochondrial (476 aa).

The transit peptide at 1–29 (MANRFLRPNLIHRFSTVSPVGPPTTIIPE) directs the protein to the mitochondrion.

This sequence belongs to the proline oxidase family. FAD serves as cofactor. As to expression, expressed in the vascular tissue and in the abscission zone of petals, sepals, stamina, pistils and siliques. Not detected in petioles.

It localises to the mitochondrion. It catalyses the reaction L-proline + a quinone = (S)-1-pyrroline-5-carboxylate + a quinol + H(+). It participates in amino-acid degradation; L-proline degradation into L-glutamate; L-glutamate from L-proline: step 1/2. Functionally, converts proline to delta-1-pyrroline-5-carboxylate. This is Proline dehydrogenase 2, mitochondrial (POX2) from Arabidopsis thaliana (Mouse-ear cress).